The following is a 142-amino-acid chain: MKLLVEKTNEKAIIPFQAHEGDAGMDLFSVEEITLKPMERKLIHTGIKIQLPKDTEAQIRPRSGLALKHGITVLNTPGTIDEGYRGEIGIILINLGSEEFKVEEGMKIAQMVIKPTLTLKVEEVVELTETTRGENGFGSTGV.

Residues 62–64 (RSG), N75, and 79–81 (TID) each bind substrate.

The protein belongs to the dUTPase family. Requires Mg(2+) as cofactor.

The enzyme catalyses dUTP + H2O = dUMP + diphosphate + H(+). Its pathway is pyrimidine metabolism; dUMP biosynthesis; dUMP from dCTP (dUTP route): step 2/2. In terms of biological role, this enzyme is involved in nucleotide metabolism: it produces dUMP, the immediate precursor of thymidine nucleotides and it decreases the intracellular concentration of dUTP so that uracil cannot be incorporated into DNA. The chain is Deoxyuridine 5'-triphosphate nucleotidohydrolase from Clostridium novyi (strain NT).